A 237-amino-acid chain; its full sequence is Tyrosine-protein kinase YwqD (237 aa).

Position 228 is a phosphotyrosine; by autocatalysis (Tyr-228).

Belongs to the CpsD/CapB family. Autophosphorylated in vitro, which inhibits ATPase activity. Dephosphorylated by YwqE in vitro.

The enzyme catalyses L-tyrosyl-[protein] + ATP = O-phospho-L-tyrosyl-[protein] + ADP + H(+). Functionally, may be involved in the regulation of capsular polysaccharide biosynthesis. Autophosphorylates in vitro. Phosphorylates and activates in vitro two UDP-glucose dehydrogenases, YwqF and TuaD, as well as the DNA-binding proteins Ssb and SsbB. The chain is Tyrosine-protein kinase YwqD (ywqD) from Bacillus subtilis (strain 168).